Consider the following 242-residue polypeptide: uncharacterized protein (242 aa).

Disordered stretches follow at residues 43-70 and 112-162; these read SRRS…TSKD and RMSR…VTPR. Residues 58–70 show a composition bias toward polar residues; sequence QSVSGRKNSTSKD. 2 stretches are compositionally biased toward low complexity: residues 122-139 and 147-162; these read ERAA…AGHA and ADGA…VTPR.

This is an uncharacterized protein from Homo sapiens (Human).